Here is a 764-residue protein sequence, read N- to C-terminus: Cyclin-F (764 aa).

Residues 19–27 carry the Nuclear localization signal 1 motif; that stretch reads RKRVRKRAS. Positions 28–75 constitute an F-box domain; sequence AVSLLSLPEELLVFVLQCLSAEDLLSVRAVHSHLCDIIDTNASIWARV. In terms of domain architecture, Cyclin N-terminal spans 307–404; that stretch reads TKRYILVDWL…EVISVLDGKI (98 aa). Residues 309-312 carry the D box 1 motif; it reads RYIL. Residues 570-575 carry the Nuclear localization signal 2 motif; the sequence is SSKRRR. Residues 583 to 738 are PEST; it reads RGAFVATPTA…PSQRIRRQVK (156 aa). The segment at 662–754 is disordered; it reads CEEDEQEPPT…HSAGEAEQED (93 aa). Over residues 682–692 the composition is skewed to low complexity; that stretch reads SSSSTSSSSSS. A compositionally biased stretch (polar residues) spans 702-722; it reads SGYSSIQSFPSPTGSSALVSP. Residues 732 to 742 are compositionally biased toward basic residues; that stretch reads RIRRQVKRKNT.

Belongs to the cyclin family. Cyclin AB subfamily. As to quaternary structure, component of the SCF(CCNF) complex. As to expression, expressed in the brain.

The protein resides in the nucleus. The protein localises to the cytoplasm. It localises to the perinuclear region. Its subcellular location is the cytoskeleton. It is found in the microtubule organizing center. The protein resides in the centrosome. The protein localises to the centriole. Functionally, substrate recognition component of a SCF (SKP1-CUL1-F-box protein) E3 ubiquitin-protein ligase complex which mediates the ubiquitination and subsequent proteasomal degradation of target proteins. The SCF(CCNF) E3 ubiquitin-protein ligase complex is an integral component of the ubiquitin proteasome system (UPS) and links proteasome degradation to the cell cycle. Mediates the substrate recognition and the proteasomal degradation of various target proteins during G2 phase involved in the regulation of cell cycle progression and in the maintenance of genome stability. May play a role in motor neuron development and axonal outgrowth. This chain is Cyclin-F (ccnf), found in Danio rerio (Zebrafish).